Here is a 122-residue protein sequence, read N- to C-terminus: Large ribosomal subunit protein uL14 (122 aa).

The protein belongs to the universal ribosomal protein uL14 family. As to quaternary structure, part of the 50S ribosomal subunit. Forms a cluster with proteins L3 and L19. In the 70S ribosome, L14 and L19 interact and together make contacts with the 16S rRNA in bridges B5 and B8.

Functionally, binds to 23S rRNA. Forms part of two intersubunit bridges in the 70S ribosome. In Marinomonas sp. (strain MWYL1), this protein is Large ribosomal subunit protein uL14.